Here is a 179-residue protein sequence, read N- to C-terminus: Large ribosomal subunit protein uL5 (179 aa).

The protein belongs to the universal ribosomal protein uL5 family. As to quaternary structure, part of the 50S ribosomal subunit; part of the 5S rRNA/L5/L18/L25 subcomplex. Contacts the 5S rRNA and the P site tRNA. Forms a bridge to the 30S subunit in the 70S ribosome.

In terms of biological role, this is one of the proteins that bind and probably mediate the attachment of the 5S RNA into the large ribosomal subunit, where it forms part of the central protuberance. In the 70S ribosome it contacts protein S13 of the 30S subunit (bridge B1b), connecting the 2 subunits; this bridge is implicated in subunit movement. Contacts the P site tRNA; the 5S rRNA and some of its associated proteins might help stabilize positioning of ribosome-bound tRNAs. The protein is Large ribosomal subunit protein uL5 of Synechococcus elongatus (strain ATCC 33912 / PCC 7942 / FACHB-805) (Anacystis nidulans R2).